Here is a 252-residue protein sequence, read N- to C-terminus: Type I iodothyronine deiodinase (252 aa).

Residues 1–17 are Extracellular-facing; that stretch reads MESLLQTIKLMLRYIQK. Residues 18-38 traverse the membrane as a helical; Signal-anchor for type III membrane protein segment; that stretch reads ALILFFLFLYVVVGKVLMFLF. Topologically, residues 39-252 are cytoplasmic; the sequence is PQTMASVLKS…EVCSVLEKKK (214 aa). U130 is a catalytic residue. Position 130 (U130) is a non-standard amino acid, selenocysteine.

Belongs to the iodothyronine deiodinase family. Predominantly monomer. Can form homodimers but homodimerization is not essential for enzyme activity.

It localises to the cell membrane. The protein localises to the endoplasmic reticulum membrane. Its subcellular location is the basolateral cell membrane. The catalysed reaction is 3,3',5-triiodo-L-thyronine + iodide + A + H(+) = L-thyroxine + AH2. The enzyme catalyses 3,3',5'-triiodo-L-thyronine + iodide + A + H(+) = L-thyroxine + AH2. It catalyses the reaction 3,3'-diiodo-L-thyronine + iodide + A + H(+) = 3,3',5'-triiodo-L-thyronine + AH2. It carries out the reaction 3,3'-diiodo-L-thyronine + iodide + A + H(+) = 3,3',5-triiodo-L-thyronine + AH2. The catalysed reaction is 3'-iodo-L-thyronine + iodide + A + H(+) = 3',5'-diiodo-L-thyronine + AH2. The enzyme catalyses 3-iodo-L-thyronine + iodide + A + H(+) = 3,5-diiodo-L-thyronine + AH2. It catalyses the reaction 3-iodo-L-thyronine + iodide + A + H(+) = 3,3'-diiodo-L-thyronine + AH2. It carries out the reaction 3,3'-diiodothyronamine + iodide + A + H(+) = 3,3',5'-triiodothyronamine + AH2. The catalysed reaction is 3'-iodothyronamine + iodide + A + H(+) = 3',5'-diiodothyronamine + AH2. The enzyme catalyses 3-iodothyronamine + iodide + A + H(+) = 3,3'-diiodothyronamine + AH2. It catalyses the reaction 3,3'-diiodothyronamine + iodide + A + H(+) = 3,3',5-triiodothyronamine + AH2. It carries out the reaction 3-iodothyronamine + iodide + A + H(+) = 3,5-diiodothyronamine + AH2. The catalysed reaction is 3,3'-diiodo-L-thyronine sulfate + iodide + A + H(+) = 3,3',5'-triiodo-L-thyronine sulfate + AH2. The enzyme catalyses 3,3',5'-triiodo-L-thyronine sulfate + iodide + A + H(+) = L-thyroxine sulfate + AH2. It catalyses the reaction 3,3'-diiodo-L-thyronine sulfate + iodide + A + H(+) = 3,3',5-triiodo-L-thyronine sulfate + AH2. With respect to regulation, lacks sensitivity to 6-n-propylthiouracil. Plays a crucial role in the metabolism of thyroid hormones (TH) and has specific roles in TH activation and inactivation by deiodination. Catalyzes the deiodination of L-thyroxine (T4) to 3,5,3'-triiodothyronine (T3) and 3,3',5'-triiodothyronine (rT3) to 3,3'-diiodothyronine (3,3'-T2) via outer-ring deiodination (ORD). Catalyzes the deiodiantion of T4 to rT3 and T3 to 3,3'-T2 via inner-ring deiodination (IRD). Catalyzes the deiodination of 3',5'-diiodothyronine (3',5'-T2) to 3'-monoiodothyronine (3'-T1) via ORD. Catalyzes the deiodination of 3,5-diiodothyronine (3,5-T2) to 3-monoiodothyronine (3-T1) and 3,3'-T2 to 3-T1 via IRD. Catalyzes the phenolic ring deiodinations of 3,3',5'-triiodothyronamine, 3',5'-diiodothyronamine and 3,3'-diiodothyronamine as well as tyrosyl ring deiodinations of 3,5,3'-triiodothyronamine and 3,5-diiodothyronamine. Catalyzes the deiodination of L-thyroxine sulfate and 3,3',5-triiodo-L-thyronine sulfate via IRD and of 3,3',5'-triiodo-L-thyronine sulfate via ORD. This Xenopus laevis (African clawed frog) protein is Type I iodothyronine deiodinase (dio1).